Here is a 248-residue protein sequence, read N- to C-terminus: Putative eukaryotic initiation factor 4A-like protein (248 aa).

The Q motif signature appears at 14–42; it reads VGFASLGLNEQLINNIKRYGITKLTPFQM. The 195-residue stretch at 45–239 folds into the Helicase ATP-binding domain; it reads IKEIKENSNV…NTFIKIPKII (195 aa). 58 to 65 lines the ATP pocket; that stretch reads SIEGTGRT. The DEAD box signature appears at 185–188; that stretch reads DELD.

Belongs to the DEAD box helicase family. eIF4A subfamily.

This is Putative eukaryotic initiation factor 4A-like protein from Dictyostelium discoideum (Social amoeba).